The following is a 245-amino-acid chain: Derlin-1 (245 aa).

At 1 to 5 (MDLEN) the chain is on the cytoplasmic side. Residues 6–26 (FLLGIPIVTRYWFLASTIIPL) form a helical membrane-spanning segment. Topologically, residues 27-57 (LGRFGFINVQWMFLQWDLVVNKFQFWRPLTA) are lumenal. A helical membrane pass occupies residues 58-78 (LIYYPVTPQTGFHWLMMCYFL). Residues 79–100 (YNYSKALESETYRGRSADYLFM) lie on the Cytoplasmic side of the membrane. A helical membrane pass occupies residues 101–121 (LIFNWFFCSGLCMALDIYFLL). Residues 122-166 (EPMVISVLYVWCQVNKDTIVSFWFGMRFPARYLPWVLWGFNAVLR) lie on the Lumenal side of the membrane. The helical transmembrane segment at 167 to 187 (GGGTNELVGILVGHAYFFVAL) threads the bilayer. The Cytoplasmic segment spans residues 188 to 245 (KYPDEYGVDLISTPEFLHRLIPDEDGGIHGQDGNIRGARQQPRGHQWPGGVGARLGGN). The tract at residues 218–245 (QDGNIRGARQQPRGHQWPGGVGARLGGN) is disordered. A compositionally biased stretch (gly residues) spans 234 to 245 (WPGGVGARLGGN).

Belongs to the derlin family.

Its subcellular location is the endoplasmic reticulum membrane. In terms of biological role, specifically required for the degradation process of misfolded endoplasmic reticulum (ER) luminal proteins. Participates in the transfer of misfolded proteins from the ER to the cytosol, where they are destroyed by the proteasome in a ubiquitin-dependent manner. The sequence is that of Derlin-1 from Caenorhabditis elegans.